An 855-amino-acid chain; its full sequence is tRNA(Met) cytidine acetyltransferase TmcA (855 aa).

ATP is bound by residues Gln260, 286–295, and Arg438; that span reads GRGKSALLGI. An N-acetyltransferase domain is found at 480 to 663; the sequence is PDLRYWFEDP…GEYSVAVIRP (184 aa). Acetyl-CoA contacts are provided by residues 590 to 592, 597 to 603, Glu630, and Arg637; these read IAT and MRHGLGS.

Belongs to the RNA cytidine acetyltransferase family. TmcA subfamily.

It localises to the cytoplasm. It carries out the reaction cytidine(34) in elongator tRNA(Met) + acetyl-CoA + ATP + H2O = N(4)-acetylcytidine(34) in elongator tRNA(Met) + ADP + phosphate + CoA + H(+). Catalyzes the formation of N(4)-acetylcytidine (ac(4)C) at the wobble position of tRNA(Met), by using acetyl-CoA as an acetyl donor and ATP (or GTP). The chain is tRNA(Met) cytidine acetyltransferase TmcA from Methanopyrus kandleri (strain AV19 / DSM 6324 / JCM 9639 / NBRC 100938).